Here is a 460-residue protein sequence, read N- to C-terminus: Ribosomal protein uS12 methylthiotransferase RimO (460 aa).

An MTTase N-terminal domain is found at 16 to 130 (NKIHFISLGC…ILSAIESKES (115 aa)). Residues cysteine 25, cysteine 61, cysteine 93, cysteine 164, cysteine 168, and cysteine 171 each coordinate [4Fe-4S] cluster. Residues 150-382 (STPKHYAYLK…SQTQKKNVEK (233 aa)) enclose the Radical SAM core domain. The TRAM domain maps to 385–455 (KQFVGKIVEA…GYDLVGRVVN (71 aa)).

This sequence belongs to the methylthiotransferase family. RimO subfamily. The cofactor is [4Fe-4S] cluster.

Its subcellular location is the cytoplasm. It catalyses the reaction L-aspartate(89)-[ribosomal protein uS12]-hydrogen + (sulfur carrier)-SH + AH2 + 2 S-adenosyl-L-methionine = 3-methylsulfanyl-L-aspartate(89)-[ribosomal protein uS12]-hydrogen + (sulfur carrier)-H + 5'-deoxyadenosine + L-methionine + A + S-adenosyl-L-homocysteine + 2 H(+). Its function is as follows. Catalyzes the methylthiolation of an aspartic acid residue of ribosomal protein uS12. The polypeptide is Ribosomal protein uS12 methylthiotransferase RimO (Chlamydia abortus (strain DSM 27085 / S26/3) (Chlamydophila abortus)).